The following is a 299-amino-acid chain: Recombination-associated protein RdgC (299 aa).

Belongs to the RdgC family.

It is found in the cytoplasm. The protein resides in the nucleoid. Its function is as follows. May be involved in recombination. The sequence is that of Recombination-associated protein RdgC from Cupriavidus necator (strain ATCC 17699 / DSM 428 / KCTC 22496 / NCIMB 10442 / H16 / Stanier 337) (Ralstonia eutropha).